The primary structure comprises 185 residues: Acireductone dioxygenase (185 aa).

Fe(2+) contacts are provided by His101, His103, Glu107, and His145. 4 residues coordinate Ni(2+): His101, His103, Glu107, and His145.

The protein belongs to the acireductone dioxygenase (ARD) family. In terms of assembly, monomer. Fe(2+) is required as a cofactor. Ni(2+) serves as cofactor.

The catalysed reaction is 1,2-dihydroxy-5-(methylsulfanyl)pent-1-en-3-one + O2 = 3-(methylsulfanyl)propanoate + CO + formate + 2 H(+). The enzyme catalyses 1,2-dihydroxy-5-(methylsulfanyl)pent-1-en-3-one + O2 = 4-methylsulfanyl-2-oxobutanoate + formate + 2 H(+). The protein operates within amino-acid biosynthesis; L-methionine biosynthesis via salvage pathway; L-methionine from S-methyl-5-thio-alpha-D-ribose 1-phosphate: step 5/6. In terms of biological role, catalyzes 2 different reactions between oxygen and the acireductone 1,2-dihydroxy-3-keto-5-methylthiopentene (DHK-MTPene) depending upon the metal bound in the active site. Fe-containing acireductone dioxygenase (Fe-ARD) produces formate and 2-keto-4-methylthiobutyrate (KMTB), the alpha-ketoacid precursor of methionine in the methionine recycle pathway. Ni-containing acireductone dioxygenase (Ni-ARD) produces methylthiopropionate, carbon monoxide and formate, and does not lie on the methionine recycle pathway. The sequence is that of Acireductone dioxygenase from Synechococcus sp. (strain RCC307).